The primary structure comprises 306 residues: Elongation factor Ts (306 aa).

The interval 81–84 is involved in Mg(2+) ion dislocation from EF-Tu; that stretch reads TDFV.

It belongs to the EF-Ts family.

The protein localises to the cytoplasm. Associates with the EF-Tu.GDP complex and induces the exchange of GDP to GTP. It remains bound to the aminoacyl-tRNA.EF-Tu.GTP complex up to the GTP hydrolysis stage on the ribosome. In Polaromonas naphthalenivorans (strain CJ2), this protein is Elongation factor Ts.